A 732-amino-acid polypeptide reads, in one-letter code: Alpha-galactosidase Mel36A (732 aa).

Residues 370–371 (DD), Trp415, Arg447, 480–484 (KWDMN), 530–533 (CSGG), and Asp552 each bind substrate. Catalysis depends on Asp482, which acts as the Nucleophile. The active-site Proton donor is Asp552.

The protein belongs to the glycosyl hydrolase 36 family. As to quaternary structure, homotetramer.

It catalyses the reaction Hydrolysis of terminal, non-reducing alpha-D-galactose residues in alpha-D-galactosides, including galactose oligosaccharides, galactomannans and galactolipids.. Functionally, hydrolyzes the short-chain alpha-galactosaccharide raffinose. This chain is Alpha-galactosidase Mel36A, found in Lactobacillus acidophilus (strain ATCC 700396 / NCK56 / N2 / NCFM).